A 321-amino-acid chain; its full sequence is Calcium-regulated beta-propeller protein CarP (321 aa).

The signal sequence occupies residues 1 to 42; it reads MTIHAQTPEPFSMSRAFTPRRLLLAVLLVALSALVLLGQSFR.

Belongs to the YjiK family.

The protein localises to the cell inner membrane. Functionally, plays a role in intracellular Ca(2+) homeostasis. Involved in modulating Ca(2+)-induced swarming motility and pyocyanine production. Plays a role in regulating virulence in a Ca(2+)-dependent manner. Involved in cell protection against oxidative stress in the presence of elevated Ca(2+). This chain is Calcium-regulated beta-propeller protein CarP, found in Pseudomonas aeruginosa (strain ATCC 15692 / DSM 22644 / CIP 104116 / JCM 14847 / LMG 12228 / 1C / PRS 101 / PAO1).